A 721-amino-acid chain; its full sequence is Nitrogen permease regulator 3 (721 aa).

The signal sequence occupies residues 1 to 21 (MSYNLPNPSLIGILLIISTHS). 2 disordered regions span residues 27-54 (YKQP…ETES) and 555-614 (DLEN…NINA). A compositionally biased stretch (acidic residues) spans 37–54 (PDEDEGEYDQEDIAETES).

It belongs to the NPR3 family.

In terms of biological role, mediates inactivation of the TORC1 complex in response to amino acid starvation. Required for meiotic nuclear division. This chain is Nitrogen permease regulator 3 (NPR3), found in Scheffersomyces stipitis (strain ATCC 58785 / CBS 6054 / NBRC 10063 / NRRL Y-11545) (Yeast).